A 1666-amino-acid polypeptide reads, in one-letter code: MAQQLPIRFSEVLQLASVGIQPSSFGFANVTLESDKYVCVRDNPNGVNQVVIVDLEDPSNVLRRPISADSVILHPKKKIIALKAQRQLQVFDLEAKAKINSYVMNQDVVYWTWISDSVIGMVTDTSVFHWTVSGSDPVKMFDRHSSLNGTQIISYKSNYNEEWFTLIGISSRDNRIAGNLQLYSKKRKVSQPLESHASAFAVIQPEGVDHEVQVLALASRLPTGSKLSIVEVDRNPNNPAFATKTVDLFFPPEAVNDFPIAIEIGSTYNVAYVVTKYGFIHVYDLETAKCIYMNRVSGESIFVTTAHKSVNGLMAINRKGQVLSVSINPETIIPYILSNLNDPGLAVRMASHANLPGADNLYMQQFQQLMAQGNYSEAAKVAASSPRGILRTSQVIDQFKLIQAAPGQIAPILQYFGTLLDKGPLNEHETIELARPVLAQNRIQLLEKWYGENKLACTEALGDLVKPYNTPFALKIYETANVPNKVVMCLSELGDFGKLATYTSQQNITPDYVSLLQNLVRVNPDQAAEFATQMFNSNPSINLEKIVDIFMSQNLVQQATAFLLDALKDDNPEHSHLQTRLLEINLINAPQVADAILGNQMFTHFDRAVIASLCERAGLVQRALELYDKPADIKRVIVHSNLLNPEWLMNYFSRFSPDEVYDYLREMLRSNLRQNLQIVVQIATRYSDLVGAQRIIEMFEKFKTFEGLYYYLGSIVNITEDPEVVYKYIQAACLMNQFTEVERICRDNNVYNPEKVKNLLKEAKLADQLPLILVCDRYDFVNDLVFYLFRNNMFQFIEIYVQRINPSKTPQVVGALLDIDCDEELVQNLLMSVVGQVPVDELVEEVERRNRLKLLLPYLESLLQSGSQDRAIYDALAKIYIDSNNNPEVFLKENNFYDTLTVGKYCEKRDPYLAFIAYEKGGNDTEIINLCNENSMFKQLARYLLKRSDSNLWSEVLQDSAYRRPLLDQVIATAVPESSDPEAVSIVVKALMEVDLPSQLIELLEKIVLQPSSFSENANLQNLLFLTAIKADKSRVMEYIDKLDKYDVDEIAEIAIENGLYEEAFRIYKIHNKHEQAMKVLVEDIVSLDRAQDYAETVEQPEVWSRLAKAQLDGIRIPDAIESYLKADDPSNYSEVIELASRAGKYEELIKYLLMARSKMHEPDVDSALLIAYAKTNQLTEMETFLIGSNVADVKAVGDECFESKNYEAAKLMYSSISNWSMLATTLVYLGEYQGAVDCARKANSIKVWKQVGTACIDKREFRLAQICGLNLIVHAEELPGLIRLYEERGYFEEVISLMEAGLGLERAHMAFYTELAILYAKYKPERMMEHLKLFWGRLNMAKVIRACDQMHLWNEAVFLYVHDQSYDNAAAVMMEQPEAFDHQSFKDIIVHVANLELYYRALNFYLEQHPMLLTDLLAALTPRIDHPRVIRIFEKSENTPLILNFMVAIQHLNIQAVNHAYNDLLIEMEDYQSLQDSIENYDHFDAIALARRLEKHSLLEFRRIAAYIYRKNKRWTQSIELSKQDRFYKDAIITARDSDQTTIAEDLMKYFVEIGNYECFAAILYTCYHLLRNDLVMEISWRKGLQDYAYPYFINFQCEMFSKVLNLEKDLKDRQAVKSEEESASTIGAGILGNTLMLTQGPMANNNDQFDSFQQASPMPRLGNF.

WD40-like repeat regions lie at residues 24 to 67, 68 to 107, 108 to 148, 149 to 194, 195 to 255, 256 to 299, and 300 to 328; these read SFGF…RPIS, ADSV…MNQD, VVYW…SSLN, GTQI…QPLE, SHAS…PEAV, NDFP…VSGE, and SIFV…VSIN. The residue at position 392 (Thr392) is a Phosphothreonine. Ser393 is subject to Phosphoserine. CHCR repeat units lie at residues 534-680, 683-825, 830-969, 975-1120, 1124-1265, 1270-1415, and 1418-1561; these read MFNS…QIVV, ATRY…DEEL, LMSV…LLDQ, VPES…IPDA, YLKA…FRLA, LNLI…MLLT, and LAAL…YECF.

The protein belongs to the clathrin heavy chain family. Clathrin triskelions, composed of 3 heavy chains and 3 light chains, are the basic subunits of the clathrin coat.

The protein localises to the cytoplasmic vesicle membrane. Its subcellular location is the membrane. It localises to the coated pit. Its function is as follows. Clathrin is the major protein of the polyhedral coat of coated pits and vesicles. The chain is Probable clathrin heavy chain (chc1) from Schizosaccharomyces pombe (strain 972 / ATCC 24843) (Fission yeast).